The primary structure comprises 104 residues: ATP synthase subunit c (104 aa).

The next 2 helical transmembrane spans lie at 31–51 (SMIA…IGMG) and 75–95 (MFIA…IALI).

The protein belongs to the ATPase C chain family. In terms of assembly, F-type ATPases have 2 components, F(1) - the catalytic core - and F(0) - the membrane proton channel. F(1) has five subunits: alpha(3), beta(3), gamma(1), delta(1), epsilon(1). F(0) has three main subunits: a(1), b(2) and c(10-14). The alpha and beta chains form an alternating ring which encloses part of the gamma chain. F(1) is attached to F(0) by a central stalk formed by the gamma and epsilon chains, while a peripheral stalk is formed by the delta and b chains.

It is found in the cell inner membrane. In terms of biological role, f(1)F(0) ATP synthase produces ATP from ADP in the presence of a proton or sodium gradient. F-type ATPases consist of two structural domains, F(1) containing the extramembraneous catalytic core and F(0) containing the membrane proton channel, linked together by a central stalk and a peripheral stalk. During catalysis, ATP synthesis in the catalytic domain of F(1) is coupled via a rotary mechanism of the central stalk subunits to proton translocation. Its function is as follows. Key component of the F(0) channel; it plays a direct role in translocation across the membrane. A homomeric c-ring of between 10-14 subunits forms the central stalk rotor element with the F(1) delta and epsilon subunits. This Sulfurimonas denitrificans (strain ATCC 33889 / DSM 1251) (Thiomicrospira denitrificans (strain ATCC 33889 / DSM 1251)) protein is ATP synthase subunit c.